Here is a 290-residue protein sequence, read N- to C-terminus: Fructose-1,6-bisphosphatase class 1 (290 aa).

Mg(2+) contacts are provided by Glu-78, Asp-96, Leu-98, and Asp-99. Residues 99–102 (DGSS), Tyr-201, and Lys-226 each bind substrate. A Mg(2+)-binding site is contributed by Glu-232.

The protein belongs to the FBPase class 1 family. Homotetramer. Mg(2+) is required as a cofactor.

The protein resides in the cytoplasm. It carries out the reaction beta-D-fructose 1,6-bisphosphate + H2O = beta-D-fructose 6-phosphate + phosphate. It participates in carbohydrate biosynthesis; gluconeogenesis. In Helicobacter pylori (strain ATCC 700392 / 26695) (Campylobacter pylori), this protein is Fructose-1,6-bisphosphatase class 1.